Reading from the N-terminus, the 231-residue chain is 7-cyano-7-deazaguanine synthase (231 aa).

8–18 (FSGGQDSTTCL) is an ATP binding site. Positions 188, 197, 200, and 203 each coordinate Zn(2+).

It belongs to the QueC family. Requires Zn(2+) as cofactor.

It catalyses the reaction 7-carboxy-7-deazaguanine + NH4(+) + ATP = 7-cyano-7-deazaguanine + ADP + phosphate + H2O + H(+). It participates in purine metabolism; 7-cyano-7-deazaguanine biosynthesis. Catalyzes the ATP-dependent conversion of 7-carboxy-7-deazaguanine (CDG) to 7-cyano-7-deazaguanine (preQ(0)). The chain is 7-cyano-7-deazaguanine synthase from Cronobacter sakazakii (strain ATCC BAA-894) (Enterobacter sakazakii).